We begin with the raw amino-acid sequence, 161 residues long: 2-C-methyl-D-erythritol 2,4-cyclodiphosphate synthase (161 aa).

Residues Asp-10 and His-12 each contribute to the a divalent metal cation site. Residues Asp-10–His-12 and His-36–Ser-37 contribute to the 4-CDP-2-C-methyl-D-erythritol 2-phosphate site. His-44 is a binding site for a divalent metal cation. Residues Asp-58–Gly-60, Thr-134–Glu-137, Phe-141, and Arg-144 contribute to the 4-CDP-2-C-methyl-D-erythritol 2-phosphate site.

It belongs to the IspF family. Homotrimer. It depends on a divalent metal cation as a cofactor.

The enzyme catalyses 4-CDP-2-C-methyl-D-erythritol 2-phosphate = 2-C-methyl-D-erythritol 2,4-cyclic diphosphate + CMP. The protein operates within isoprenoid biosynthesis; isopentenyl diphosphate biosynthesis via DXP pathway; isopentenyl diphosphate from 1-deoxy-D-xylulose 5-phosphate: step 4/6. Involved in the biosynthesis of isopentenyl diphosphate (IPP) and dimethylallyl diphosphate (DMAPP), two major building blocks of isoprenoid compounds. Catalyzes the conversion of 4-diphosphocytidyl-2-C-methyl-D-erythritol 2-phosphate (CDP-ME2P) to 2-C-methyl-D-erythritol 2,4-cyclodiphosphate (ME-CPP) with a corresponding release of cytidine 5-monophosphate (CMP). This is 2-C-methyl-D-erythritol 2,4-cyclodiphosphate synthase from Parabacteroides distasonis (strain ATCC 8503 / DSM 20701 / CIP 104284 / JCM 5825 / NCTC 11152).